The following is a 661-amino-acid chain: Coagulation factor XIII B chain (661 aa).

An N-terminal signal peptide occupies residues 1–20; it reads MRLKNLTFIIILIISGELYA. 10 consecutive Sushi domains span residues 24–88, 89–148, 151–210, 211–269, 272–329, 334–391, 394–452, 453–516, 522–580, and 581–647; these read PCGF…PRCF, KKCT…TCRK, ETCL…KCTK, LKCS…VCEG, NRCP…KCIE, VACE…ECVE, ENCK…VCLE, PCTV…PLCT, GMCT…LCLE, and PCTL…PRCI. 20 disulfides stabilise this stretch: Cys25–Cys76, Cys59–Cys87, Cys91–Cys135, Cys118–Cys146, Cys153–Cys197, Cys180–Cys208, Cys213–Cys255, Cys241–Cys267, Cys274–Cys316, Cys302–Cys327, Cys336–Cys378, Cys364–Cys389, Cys396–Cys439, Cys425–Cys450, Cys454–Cys505, Cys486–Cys515, Cys524–Cys567, Cys553–Cys578, Cys582–Cys636, and Cys616–Cys646. Asn162 carries an N-linked (GlcNAc...) asparagine glycan. The N-linked (GlcNAc...) asparagine glycan is linked to Asn545. Positions 617 to 619 match the Cell attachment site motif; the sequence is RGD.

Tetramer of two A chains (F13A1) and two B (F13B) chains.

It localises to the secreted. Functionally, the B chain of factor XIII is not catalytically active, but is thought to stabilize the A subunits and regulate the rate of transglutaminase formation by thrombin. This Homo sapiens (Human) protein is Coagulation factor XIII B chain (F13B).